The sequence spans 920 residues: DNA ligase (920 aa).

NAD(+)-binding positions include 90–94 (DAAYD), 139–140 (SL), and E173. K175 (N6-AMP-lysine intermediate) is an active-site residue. Residues R196, E235, K360, and K384 each coordinate NAD(+). Positions 481, 484, 500, and 506 each coordinate Zn(2+). Residues 659-691 (RAQGEAAIESAETQGDTASETTGAPTGAEAPLG) are disordered. Positions 669-682 (AETQGDTASETTGA) are enriched in polar residues. A BRCT domain is found at 839-920 (SLPQTLAGKT…FAQLLATGTI (82 aa)).

It belongs to the NAD-dependent DNA ligase family. LigA subfamily. The cofactor is Mg(2+). Requires Mn(2+) as cofactor.

The catalysed reaction is NAD(+) + (deoxyribonucleotide)n-3'-hydroxyl + 5'-phospho-(deoxyribonucleotide)m = (deoxyribonucleotide)n+m + AMP + beta-nicotinamide D-nucleotide.. In terms of biological role, DNA ligase that catalyzes the formation of phosphodiester linkages between 5'-phosphoryl and 3'-hydroxyl groups in double-stranded DNA using NAD as a coenzyme and as the energy source for the reaction. It is essential for DNA replication and repair of damaged DNA. This is DNA ligase from Bifidobacterium longum (strain NCC 2705).